The sequence spans 353 residues: Protein RecA (353 aa).

Residue 80-87 coordinates ATP; the sequence is GPESSGKT.

It belongs to the RecA family.

It is found in the cytoplasm. Can catalyze the hydrolysis of ATP in the presence of single-stranded DNA, the ATP-dependent uptake of single-stranded DNA by duplex DNA, and the ATP-dependent hybridization of homologous single-stranded DNAs. It interacts with LexA causing its activation and leading to its autocatalytic cleavage. In Chlorobium chlorochromatii (strain CaD3), this protein is Protein RecA.